Reading from the N-terminus, the 252-residue chain is PF03932 family protein CutC (252 aa).

Belongs to the CutC family.

Its subcellular location is the cytoplasm. The chain is PF03932 family protein CutC from Pectobacterium atrosepticum (strain SCRI 1043 / ATCC BAA-672) (Erwinia carotovora subsp. atroseptica).